A 430-amino-acid chain; its full sequence is MDRIRITGGNKLNGVIPISGAKNAALPLMIASLLTSDTLTLENVPHLADVEQLIRILGNHGVDISVNGRRESQGEAYSRTVHFTCRTIVDTTAPYELVSKMRASFWVIGPLLAREGRARVSLPGGCAIGTRPVDLFIEGLQALGATMEIDGGYINASAPKGGLIGAVYTFPKVSVGATHVMLMAASLARGTTVIHNAAREPEVVDLAHCLIAMGAKIEGAGTSTITIEGVTSLSGARHRVLPDRIETGTYAMAVAMAGGDVVLEGTRASLLDNALDTLRLAGVTISDTDTGLRVVRNGNGIQPVDIVTEPFPGFPTDLQAQFMALMTRSQGVSHITETIFENRFMHVQELARLGAKISLSGQMARIEGVTRLKGAPVMATDLRASVSLVIAGLVAEGETMVSRVYHLDRGFERLEEKLTRCGALVERVSD.

Position 22–23 (22–23 (KN)) interacts with phosphoenolpyruvate. R102 lines the UDP-N-acetyl-alpha-D-glucosamine pocket. C126 (proton donor) is an active-site residue. Residue C126 is modified to 2-(S-cysteinyl)pyruvic acid O-phosphothioketal. UDP-N-acetyl-alpha-D-glucosamine contacts are provided by residues 131–135 (RPVDL), 172–175 (KVSV), D317, and I339.

This sequence belongs to the EPSP synthase family. MurA subfamily.

The protein resides in the cytoplasm. It catalyses the reaction phosphoenolpyruvate + UDP-N-acetyl-alpha-D-glucosamine = UDP-N-acetyl-3-O-(1-carboxyvinyl)-alpha-D-glucosamine + phosphate. Its pathway is cell wall biogenesis; peptidoglycan biosynthesis. Functionally, cell wall formation. Adds enolpyruvyl to UDP-N-acetylglucosamine. The sequence is that of UDP-N-acetylglucosamine 1-carboxyvinyltransferase from Agrobacterium fabrum (strain C58 / ATCC 33970) (Agrobacterium tumefaciens (strain C58)).